Here is an 86-residue protein sequence, read N- to C-terminus: Large ribosomal subunit protein bL27 (86 aa).

Residues M1–K24 are disordered. The segment covering S9–S19 has biased composition (polar residues).

Belongs to the bacterial ribosomal protein bL27 family.

The sequence is that of Large ribosomal subunit protein bL27 from Salinibacter ruber (strain DSM 13855 / M31).